Consider the following 63-residue polypeptide: uncharacterized protein (63 aa).

This is an uncharacterized protein from Archaeoglobus fulgidus (strain ATCC 49558 / DSM 4304 / JCM 9628 / NBRC 100126 / VC-16).